The primary structure comprises 705 residues: Polyphosphate kinase (705 aa).

Asparagine 58 provides a ligand contact to ATP. Residues arginine 389 and arginine 419 each contribute to the Mg(2+) site. Histidine 449 serves as the catalytic Phosphohistidine intermediate. Tyrosine 482, arginine 578, and histidine 606 together coordinate ATP.

It belongs to the polyphosphate kinase 1 (PPK1) family. Requires Mg(2+) as cofactor. In terms of processing, an intermediate of this reaction is the autophosphorylated ppk in which a phosphate is covalently linked to a histidine residue through a N-P bond.

It catalyses the reaction [phosphate](n) + ATP = [phosphate](n+1) + ADP. In terms of biological role, catalyzes the reversible transfer of the terminal phosphate of ATP to form a long-chain polyphosphate (polyP). In Halalkalibacterium halodurans (strain ATCC BAA-125 / DSM 18197 / FERM 7344 / JCM 9153 / C-125) (Bacillus halodurans), this protein is Polyphosphate kinase.